We begin with the raw amino-acid sequence, 1124 residues long: DNA-directed RNA polymerase subunit Rpo2 (1124 aa).

Zn(2+)-binding residues include cysteine 1061, cysteine 1064, cysteine 1079, and histidine 1082.

It belongs to the RNA polymerase beta chain family. In terms of assembly, part of the 13-subunit RNA polymerase complex. It depends on Zn(2+) as a cofactor.

It localises to the cytoplasm. The catalysed reaction is RNA(n) + a ribonucleoside 5'-triphosphate = RNA(n+1) + diphosphate. DNA-dependent RNA polymerase (RNAP) catalyzes the transcription of DNA into RNA using the four ribonucleoside triphosphates as substrates. This subunit is involved in DNA promoter recognition. In Saccharolobus solfataricus (strain ATCC 35092 / DSM 1617 / JCM 11322 / P2) (Sulfolobus solfataricus), this protein is DNA-directed RNA polymerase subunit Rpo2.